The sequence spans 1314 residues: Ubinuclein-2 (1314 aa).

Residues 1–113 (MAEPRRVAFI…PPPRPPKETV (113 aa)) are disordered. The residue at position 13 (serine 13) is a Phosphoserine. Composition is skewed to basic and acidic residues over residues 16–31 (RRREADFAGAEREPPR) and 55–67 (ARDKPLPQREVSR). The span at 81 to 96 (PEPPPPPLPLQTPPPR) shows a compositional bias: pro residues. Threonine 229 bears the Phosphothreonine mark. At serine 236 the chain carries Phosphoserine. The disordered stretch occupies residues 236-288 (SDTEEDDFTDNQKHKPPKVPKIKEDDIEVKKRKRKEEGEKEKKPRKKVPKQLG). A Phosphothreonine modification is found at threonine 238. A Glycyl lysine isopeptide (Lys-Gly) (interchain with G-Cter in SUMO2) cross-link involves residue lysine 258. At serine 297 the chain carries Phosphoserine. 9 disordered regions span residues 322–345 (DALKKESTPKVPVTPSSSSLPKPP), 400–424 (ATSDGSPLSESGGENGNTTHPTFPS), 559–584 (LQADEEREKNGSDDDDDEKPGKRVIG), 657–709 (LTSA…ASAS), 785–818 (ATPKKLDSTQTAHSSSLIAGHTGPVPKKPQDLAH), 849–893 (GLQR…SLTQ), 948–975 (YRLPLSTPSPGNGSQGPHPLVSRTAPST), 1003–1185 (ASPK…GSSV), and 1288–1314 (PLPAHLQQAFNDGGQSKGDTKLPRKPQ). Low complexity predominate over residues 330 to 341 (PKVPVTPSSSSL). Phosphoserine occurs at positions 402, 405, and 408. The span at 415–424 (GNTTHPTFPS) shows a compositional bias: polar residues. 2 stretches are compositionally biased toward basic and acidic residues: residues 560–570 (QADEEREKNGS) and 673–684 (KVKECSPKKDPK). Serine 570 carries the post-translational modification Phosphoserine. Residues 685 to 709 (APASVVASGGGPSTSSSTSIVASAS) show a composition bias toward low complexity. The span at 792-801 (STQTAHSSSL) shows a compositional bias: polar residues. The segment covering 849–879 (GLQRSSQIHASSSSQTHVSSSQAQAAASSHA) has biased composition (low complexity). The segment covering 883 to 893 (SEAQDASSLTQ) has biased composition (polar residues). The segment covering 1003-1013 (ASPKLAASPKP) has biased composition (low complexity). Residues 1014 to 1028 (ATSPKPLPSPKPSVS) are compositionally biased toward pro residues. Low complexity predominate over residues 1029–1040 (PKPSLSAKPSIS). Lysine 1036 carries the post-translational modification N6-acetyllysine. 2 stretches are compositionally biased toward polar residues: residues 1057-1132 (PSSS…NSLS) and 1142-1153 (RGSNLNSSGANR). At serine 1091 the chain carries Phosphoserine. The residue at position 1116 (lysine 1116) is an N6-acetyllysine. The segment covering 1305–1314 (GDTKLPRKPQ) has biased composition (basic and acidic residues).

Belongs to the ubinuclein family.

The protein is Ubinuclein-2 (Ubn2) of Mus musculus (Mouse).